Reading from the N-terminus, the 449-residue chain is MQVTVNERDAVQSVATAHPAANGESHGHGMDKLVIEGGHRLSGEIVVSGAKNAALPILCAGLLTGDPVDLDNVPNLKDVRTTLKVLNQMGVKSETDGCRVQLDASRVDNLVAPYELVKTMRASILVLGPLLARFGEAKVSLPGGCAIGARPVDQHIKGLQAMGAEISIEHGFIEARAKRLKGARIVTDMITVTGTENLLMAATLADGETVIENAAREPEVSDLAHLLVAMGAKIDGIGTDRLVIQGVERLHGARHSVIPDRIEAGTFLCAVAAAGGDVRLTGVRPHILDAVIDKLREAGVSIEEGDSWLRVKMDRRPSAVTIRTSEYPAFPTDMQAQFMALNTVATGTAQVVETIFENRFMHVQELNRLGANITIDGNTALVTGVDKLSGANVMATDLRASASLVIAGLRAEGETLVDRIYHLDRGYDRMEAKLTAVGANVRRLSGSQA.

51-52 (KN) lines the phosphoenolpyruvate pocket. Position 121 (Arg-121) interacts with UDP-N-acetyl-alpha-D-glucosamine. The active-site Proton donor is Cys-145. The residue at position 145 (Cys-145) is a 2-(S-cysteinyl)pyruvic acid O-phosphothioketal. Residues 150-154 (RPVDQ), Asp-333, and Ile-355 each bind UDP-N-acetyl-alpha-D-glucosamine.

The protein belongs to the EPSP synthase family. MurA subfamily.

The protein localises to the cytoplasm. The catalysed reaction is phosphoenolpyruvate + UDP-N-acetyl-alpha-D-glucosamine = UDP-N-acetyl-3-O-(1-carboxyvinyl)-alpha-D-glucosamine + phosphate. It participates in cell wall biogenesis; peptidoglycan biosynthesis. Functionally, cell wall formation. Adds enolpyruvyl to UDP-N-acetylglucosamine. The polypeptide is UDP-N-acetylglucosamine 1-carboxyvinyltransferase (Burkholderia lata (strain ATCC 17760 / DSM 23089 / LMG 22485 / NCIMB 9086 / R18194 / 383)).